We begin with the raw amino-acid sequence, 177 residues long: Nucleoside triphosphate/diphosphate phosphatase (177 aa).

The active-site Proton donor is the arginine 24. Positions 88, 104, 106, 108, 121, and 124 each coordinate Mg(2+).

This sequence belongs to the Ntdp family. It depends on Mg(2+) as a cofactor.

The enzyme catalyses a ribonucleoside 5'-triphosphate + H2O = a ribonucleoside 5'-diphosphate + phosphate + H(+). It carries out the reaction a ribonucleoside 5'-diphosphate + H2O = a ribonucleoside 5'-phosphate + phosphate + H(+). Its function is as follows. Has nucleoside phosphatase activity towards nucleoside triphosphates and nucleoside diphosphates. This is Nucleoside triphosphate/diphosphate phosphatase from Geobacillus sp. (strain WCH70).